The following is a 171-amino-acid chain: Shikimate kinase (171 aa).

Residue 14–19 (GAGKST) participates in ATP binding. A Mg(2+)-binding site is contributed by Ser-18. Substrate contacts are provided by Asp-36, Arg-60, and Gly-82. Arg-120 provides a ligand contact to ATP. Arg-139 contributes to the substrate binding site. Gln-156 lines the ATP pocket.

This sequence belongs to the shikimate kinase family. As to quaternary structure, monomer. It depends on Mg(2+) as a cofactor.

Its subcellular location is the cytoplasm. The catalysed reaction is shikimate + ATP = 3-phosphoshikimate + ADP + H(+). It participates in metabolic intermediate biosynthesis; chorismate biosynthesis; chorismate from D-erythrose 4-phosphate and phosphoenolpyruvate: step 5/7. Its function is as follows. Catalyzes the specific phosphorylation of the 3-hydroxyl group of shikimic acid using ATP as a cosubstrate. The sequence is that of Shikimate kinase from Shewanella loihica (strain ATCC BAA-1088 / PV-4).